Consider the following 349-residue polypeptide: MAVMAQTVQETATVLEEEARTVTLVAPKTTPRKYKYIYTNFLTFSYAHLAALYGLYLCFTSAKWETLLFSFVLFHMSNIGITAGAHRLWTHKTFKAKLPLEIVLMIFNSLAFQNTAITWAREHRLHHKYSDTDADPHNASRGFFYSHVGWLLVKKHPDVLKYGKTIDMSDVYNNPVLKFQKKYAVPLIGTVCFALPTLIPVYCWGESWNNAWHIALFRYIFNLNVTFLVNSAAHIWGNKPYDKSILPAQNLLVSFLASGEGFHNYHHVFPWDYRTAELGNNFLNLTTLFIDFCAWFGWAYDLKSVSEDIIKQRAKRTGDGSSGVIWGWDDKDMDRDIKSKANIFYAKKE.

2 helical membrane passes run 41–61 and 66–86; these read FLTFSYAHLAALYGLYLCFTS and TLLFSFVLFHMSNIGITAGAH. The Histidine box-1 motif lies at 86-91; the sequence is HRLWTH. The Histidine box-2 motif lies at 123–127; that stretch reads HRLHH. A helical transmembrane segment spans residues 184 to 204; that stretch reads AVPLIGTVCFALPTLIPVYCW. The Histidine box-3 signature appears at 263–267; that stretch reads HNYHH. A helical transmembrane segment spans residues 282 to 302; that stretch reads FLNLTTLFIDFCAWFGWAYDL.

This sequence belongs to the fatty acid desaturase type 1 family. Fe cation is required as a cofactor. Adult female pheromone gland. Increases by two or three orders of magnitude during the first 2 days after adult eclosion.

It localises to the endoplasmic reticulum membrane. The enzyme catalyses an 11,12-saturated fatty acyl-CoA + 2 Fe(II)-[cytochrome b5] + O2 + 2 H(+) = an (11Z)-Delta(11)-fatty acyl-CoA + 2 Fe(III)-[cytochrome b5] + 2 H2O. In terms of biological role, catalyzes the formation of Delta(11) fatty acyl precursors in the pheromone gland. This chain is Acyl-CoA Delta(11) desaturase (D11DS), found in Trichoplusia ni (Cabbage looper).